Consider the following 121-residue polypeptide: Iron-sulfur cluster assembly protein CyaY (121 aa).

It belongs to the frataxin family.

In terms of biological role, involved in iron-sulfur (Fe-S) cluster assembly. May act as a regulator of Fe-S biogenesis. This is Iron-sulfur cluster assembly protein CyaY from Buchnera aphidicola subsp. Schizaphis graminum (strain Sg).